We begin with the raw amino-acid sequence, 313 residues long: Malate dehydrogenase (313 aa).

Residues 11–16 (GAGSIG) and Asp-35 contribute to the NAD(+) site. Substrate-binding residues include Arg-84 and Arg-90. NAD(+)-binding positions include Asn-97 and 120-122 (VTN). Residues Asn-122 and Arg-153 each coordinate substrate. His-177 (proton acceptor) is an active-site residue.

This sequence belongs to the LDH/MDH superfamily. MDH type 3 family.

The catalysed reaction is (S)-malate + NAD(+) = oxaloacetate + NADH + H(+). In terms of biological role, catalyzes the reversible oxidation of malate to oxaloacetate. The sequence is that of Malate dehydrogenase from Ehrlichia chaffeensis (strain ATCC CRL-10679 / Arkansas).